The chain runs to 491 residues: Anthranilate synthase component 1 (491 aa).

L-tryptophan is bound by residues Ser49 and 271–273; that span reads PYL. 306–307 contacts chorismate; that stretch reads GT. Glu333 provides a ligand contact to Mg(2+). Chorismate contacts are provided by residues Tyr421, Arg441, 455-457, and Gly457; that span reads GAG. Glu470 is a Mg(2+) binding site.

It belongs to the anthranilate synthase component I family. Heterotetramer consisting of two non-identical subunits: a beta subunit (TrpG) and a large alpha subunit (TrpE). Mg(2+) serves as cofactor.

It catalyses the reaction chorismate + L-glutamine = anthranilate + pyruvate + L-glutamate + H(+). It functions in the pathway amino-acid biosynthesis; L-tryptophan biosynthesis; L-tryptophan from chorismate: step 1/5. Feedback inhibited by tryptophan. Its function is as follows. Part of a heterotetrameric complex that catalyzes the two-step biosynthesis of anthranilate, an intermediate in the biosynthesis of L-tryptophan. In the first step, the glutamine-binding beta subunit (TrpG) of anthranilate synthase (AS) provides the glutamine amidotransferase activity which generates ammonia as a substrate that, along with chorismate, is used in the second step, catalyzed by the large alpha subunit of AS (TrpE) to produce anthranilate. In the absence of TrpG, TrpE can synthesize anthranilate directly from chorismate and high concentrations of ammonia. This chain is Anthranilate synthase component 1 (trpE), found in Neisseria meningitidis serogroup B (strain ATCC BAA-335 / MC58).